Consider the following 391-residue polypeptide: Cold-shock protein CS120 (391 aa).

A run of 17 repeats spans residues Gly-9–Glu-31, Thr-49–Thr-62, Gly-72–Gln-94, Thr-95–Ala-108, Thr-115–Ala-128, Thr-135–Thr-148, Gly-156–Gln-178, Thr-179–Ala-192, Gly-199–Thr-212, Gly-220–Gln-242, Thr-243–Ala-256, Gly-263–Thr-276, Gly-284–Gln-306, Thr-307–Ala-320, Gly-327–Ile-340, Thr-350–Thr-363, and Gly-374–His-391. The tract at residues Gly-9 to His-391 is 6 X 23 AA approximate repeats. Residues Lys-21 to Ala-33 show a composition bias toward basic and acidic residues. Residues Lys-21 to His-391 form a disordered region. Positions Gly-34–Ala-59 are enriched in low complexity. An 11 X 14 AA approximate repeats region spans residues Thr-49 to Thr-363. Residues His-70 to His-92 show a composition bias toward basic and acidic residues. Residues Gln-93–Thr-145 are compositionally biased toward low complexity. A compositionally biased stretch (basic and acidic residues) spans Thr-155–His-176. Over residues Gln-177–Thr-196 the composition is skewed to low complexity. A compositionally biased stretch (basic and acidic residues) spans Thr-219–His-240. 2 stretches are compositionally biased toward low complexity: residues Gln-241 to Thr-260 and His-272 to Ser-282. The span at Thr-283 to His-304 shows a compositional bias: basic and acidic residues. Low complexity-rich tracts occupy residues Gln-305–Thr-324 and Gln-333–Gly-351. Residues Gly-361–Gly-372 are compositionally biased toward gly residues. Residues Ile-373–His-391 show a composition bias toward basic and acidic residues.

The protein belongs to the plant dehydrin family.

May reduce intracellular freezing damage during winter by hydrogen-bonding to the lattice of the nascent ice crystals, thus modifying the structure and/or propagation of ice crystals. This is Cold-shock protein CS120 (CS120) from Triticum aestivum (Wheat).